The sequence spans 442 residues: Plasmalemma vesicle-associated protein (442 aa).

Residues 1 to 27 (MGLAMEHGGSYARAGGSSRGCWYYLRY) lie on the Cytoplasmic side of the membrane. Residues 28-48 (FFLFVSLIQFLIILGLVLFMV) form a helical; Signal-anchor for type II membrane protein membrane-spanning segment. The Extracellular segment spans residues 49–442 (YGNVHVSTES…AGIPVAPSSG (394 aa)). Residues 57-77 (ESNLQATERRAEGLYSQLLGL) are a coiled coil. N-linked (GlcNAc...) asparagine glycans are attached at residues Asn-83, Asn-89, Asn-113, and Asn-151. Coiled-coil stretches lie at residues 202–225 (KTRELQHQERQLAKEQLQKVQALC) and 280–387 (SSKV…SALD). 2 disordered regions span residues 301–328 (NSDLQRQKLEAQQGLRASQEAKQKVEKE) and 394–418 (SQPMMPVSRPMGPVPNPQPIDPASL). Basic and acidic residues predominate over residues 319–328 (QEAKQKVEKE).

In terms of assembly, homodimer. In terms of tissue distribution, expressed in lung, kidney, heart, aorta, placenta, muscle, pituitary gland, adrenals, mammary gland, bladder, lymph node, bone marrow, trachea, digestive tract, liver and tumor-associated endothelium.

It is found in the cell membrane. Its subcellular location is the membrane. The protein localises to the caveola. It localises to the cytoplasm. The protein resides in the perinuclear region. Its function is as follows. Endothelial cell-specific membrane protein involved in the formation of the diaphragms that bridge endothelial fenestrae. It is also required for the formation of stomata of caveolae and transendothelial channels. Functions in microvascular permeability, endothelial fenestrae contributing to the passage of water and solutes and regulating transcellular versus paracellular flow in different organs. Plays a specific role in embryonic development. This is Plasmalemma vesicle-associated protein (PLVAP) from Homo sapiens (Human).